A 749-amino-acid chain; its full sequence is Protein lin-54 homolog (749 aa).

Lys139 is covalently cross-linked (Glycyl lysine isopeptide (Lys-Gly) (interchain with G-Cter in SUMO2)). Residues Lys244 and Lys249 each carry the N6-acetyllysine modification. Residues Ser264, Ser282, Ser310, and Ser314 each carry the phosphoserine modification. Lys357 participates in a covalent cross-link: Glycyl lysine isopeptide (Lys-Gly) (interchain with G-Cter in SUMO2). One can recognise a CRC domain in the interval 521-634 (PRKPCNCTKS…KCIGCKNFEE (114 aa)). Residues 523–536 (KPCNCTKSLCLKLY) are DNA-binding. Cys525, Cys527, Cys532, Cys537, Cys539, Cys546, Cys549, Cys551, and Cys554 together coordinate Zn(2+). The interval 583–596 (IGKGKEGESDRRHS) is linker. The Zn(2+) site is built by Cys599, Cys601, Cys606, Cys611, Cys613, Cys620, Cys624, Cys626, and Cys629. The interval 599–612 (CNCKRSGCLKNYCE) is DNA-binding. Ser635 is modified (phosphoserine). Glycyl lysine isopeptide (Lys-Gly) (interchain with G-Cter in SUMO2) cross-links involve residues Lys639, Lys659, and Lys661.

Belongs to the lin-54 family. As to quaternary structure, component of the DREAM complex (also named LINC complex) at least composed of E2F4, E2F5, LIN9, LIN37, LIN52, LIN54, MYBL1, MYBL2, RBL1, RBL2, RBBP4, RBL2, TFDP1 and TFDP2. The complex exists in quiescent cells where it represses cell cycle-dependent genes. It dissociates in S phase when LIN9, LIN37, LIN52 and LIN54 form a subcomplex that binds to MYBL2.

The protein resides in the nucleus. Component of the DREAM complex, a multiprotein complex that can both act as a transcription activator or repressor depending on the context. In G0 phase, the complex binds to more than 800 promoters and is required for repression of E2F target genes. In S phase, the complex selectively binds to the promoters of G2/M genes whose products are required for mitosis and participates in their cell cycle dependent activation. In the complex, acts as a DNA-binding protein that binds the promoter of CDK1 in a sequence-specific manner. Specifically recognizes the consensus motif 5'-TTYRAA-3' in target DNA. This is Protein lin-54 homolog (Lin54) from Mus musculus (Mouse).